A 261-amino-acid chain; its full sequence is (R)-S-adenosyl-L-methionine hydrolase (261 aa).

3 residues coordinate adenosine: aspartate 12, aspartate 72, and asparagine 187. (R)-S-adenosyl-L-methionine is bound by residues asparagine 187, serine 231, and valine 239. An adenosine-binding site is contributed by valine 239.

It belongs to the SAM hydrolase / SAM-dependent halogenase family.

It catalyses the reaction (R)-S-adenosyl-L-methionine + H2O = adenosine + L-methionine + H(+). In terms of biological role, specifically hydrolyzes (R)-S-adenosyl-L-methionine ((R)-SAM), the inactive form of the ubiquitous cofactor SAM, into adenosine and L-methionine. Is stereoselective as it cannot use the active form of SAM, (S)-S-adenosyl-L-methionine, as substrate. Likely plays a role in preventing accumulation of (R)-S-adenosyl-L-methionine in cells; maintenance of (S)-S-denosyl-L-methionine homochirality is important for cellular health given that the (R)-form is largely inactive as a methyl donor and can function as an inhibitor of methyltransferases. In Salinispora tropica (strain ATCC BAA-916 / DSM 44818 / JCM 13857 / NBRC 105044 / CNB-440), this protein is (R)-S-adenosyl-L-methionine hydrolase.